The following is a 131-amino-acid chain: Large ribosomal subunit protein bL19 (131 aa).

This sequence belongs to the bacterial ribosomal protein bL19 family.

Functionally, this protein is located at the 30S-50S ribosomal subunit interface and may play a role in the structure and function of the aminoacyl-tRNA binding site. This is Large ribosomal subunit protein bL19 from Polynucleobacter necessarius subsp. necessarius (strain STIR1).